The following is a 110-amino-acid chain: Protein YcgL (110 aa).

The YcgL domain maps to 14–98 (MFCVIYRSSK…PPEDLLKQHL (85 aa)). Residues 88–110 (PPPEDLLKQHLSSVGQNTSPADR) form a disordered region. A compositionally biased stretch (polar residues) spans 97–110 (HLSSVGQNTSPADR).

The protein is Protein YcgL of Salmonella paratyphi A (strain ATCC 9150 / SARB42).